The following is a 208-amino-acid chain: Uracil phosphoribosyltransferase (208 aa).

Residues Arg78, Arg103, and 130-138 (DPMLATGGS) each bind 5-phospho-alpha-D-ribose 1-diphosphate. Uracil is bound by residues Ile193 and 198–200 (GDA). A 5-phospho-alpha-D-ribose 1-diphosphate-binding site is contributed by Asp199.

The protein belongs to the UPRTase family. Mg(2+) serves as cofactor.

It carries out the reaction UMP + diphosphate = 5-phospho-alpha-D-ribose 1-diphosphate + uracil. The protein operates within pyrimidine metabolism; UMP biosynthesis via salvage pathway; UMP from uracil: step 1/1. With respect to regulation, allosterically activated by GTP. Catalyzes the conversion of uracil and 5-phospho-alpha-D-ribose 1-diphosphate (PRPP) to UMP and diphosphate. The protein is Uracil phosphoribosyltransferase of Shewanella amazonensis (strain ATCC BAA-1098 / SB2B).